The primary structure comprises 448 residues: Probable glycine dehydrogenase (decarboxylating) subunit 1 (448 aa).

It belongs to the GcvP family. N-terminal subunit subfamily. The glycine cleavage system is composed of four proteins: P, T, L and H. In this organism, the P 'protein' is a heterodimer of two subunits.

It carries out the reaction N(6)-[(R)-lipoyl]-L-lysyl-[glycine-cleavage complex H protein] + glycine + H(+) = N(6)-[(R)-S(8)-aminomethyldihydrolipoyl]-L-lysyl-[glycine-cleavage complex H protein] + CO2. The glycine cleavage system catalyzes the degradation of glycine. The P protein binds the alpha-amino group of glycine through its pyridoxal phosphate cofactor; CO(2) is released and the remaining methylamine moiety is then transferred to the lipoamide cofactor of the H protein. The polypeptide is Probable glycine dehydrogenase (decarboxylating) subunit 1 (Geobacillus thermodenitrificans (strain NG80-2)).